Here is a 331-residue protein sequence, read N- to C-terminus: GTP 3',8-cyclase (331 aa).

Positions serine 9–proline 233 constitute a Radical SAM core domain. Arginine 18 is a GTP binding site. [4Fe-4S] cluster contacts are provided by cysteine 25 and cysteine 29. Tyrosine 31 lines the S-adenosyl-L-methionine pocket. Cysteine 32 is a [4Fe-4S] cluster binding site. Arginine 67 lines the GTP pocket. Glycine 71 is a binding site for S-adenosyl-L-methionine. GTP is bound at residue threonine 98. Residue serine 122 coordinates S-adenosyl-L-methionine. Lysine 159 is a binding site for GTP. Position 193 (methionine 193) interacts with S-adenosyl-L-methionine. Positions 257 and 260 each coordinate [4Fe-4S] cluster. Arginine 262–arginine 264 contributes to the GTP binding site. Cysteine 274 lines the [4Fe-4S] cluster pocket.

Belongs to the radical SAM superfamily. MoaA family. As to quaternary structure, monomer and homodimer. The cofactor is [4Fe-4S] cluster.

It carries out the reaction GTP + AH2 + S-adenosyl-L-methionine = (8S)-3',8-cyclo-7,8-dihydroguanosine 5'-triphosphate + 5'-deoxyadenosine + L-methionine + A + H(+). Its pathway is cofactor biosynthesis; molybdopterin biosynthesis. In terms of biological role, catalyzes the cyclization of GTP to (8S)-3',8-cyclo-7,8-dihydroguanosine 5'-triphosphate. This is GTP 3',8-cyclase from Saccharophagus degradans (strain 2-40 / ATCC 43961 / DSM 17024).